The chain runs to 499 residues: Ethanolamine-phosphate phospho-lyase (499 aa).

Residue K278 is modified to N6-(pyridoxal phosphate)lysine.

Belongs to the class-III pyridoxal-phosphate-dependent aminotransferase family. As to quaternary structure, homotetramer. Pyridoxal 5'-phosphate serves as cofactor.

The protein localises to the mitochondrion. The catalysed reaction is phosphoethanolamine + H2O = acetaldehyde + NH4(+) + phosphate. Functionally, catalyzes the pyridoxal-phosphate-dependent breakdown of phosphoethanolamine, converting it to ammonia, inorganic phosphate and acetaldehyde. The sequence is that of Ethanolamine-phosphate phospho-lyase (Etnppl) from Mus musculus (Mouse).